The chain runs to 323 residues: Aspartate carbamoyltransferase catalytic subunit (323 aa).

Residues R55 and T56 each contribute to the carbamoyl phosphate site. K83 provides a ligand contact to L-aspartate. Residues R105, H138, and Q141 each contribute to the carbamoyl phosphate site. L-aspartate is bound by residues R181 and R235. Carbamoyl phosphate-binding residues include G276 and P277.

The protein belongs to the aspartate/ornithine carbamoyltransferase superfamily. ATCase family. In terms of assembly, heterododecamer (2C3:3R2) of six catalytic PyrB chains organized as two trimers (C3), and six regulatory PyrI chains organized as three dimers (R2).

The enzyme catalyses carbamoyl phosphate + L-aspartate = N-carbamoyl-L-aspartate + phosphate + H(+). It functions in the pathway pyrimidine metabolism; UMP biosynthesis via de novo pathway; (S)-dihydroorotate from bicarbonate: step 2/3. In terms of biological role, catalyzes the condensation of carbamoyl phosphate and aspartate to form carbamoyl aspartate and inorganic phosphate, the committed step in the de novo pyrimidine nucleotide biosynthesis pathway. This Corynebacterium aurimucosum (strain ATCC 700975 / DSM 44827 / CIP 107346 / CN-1) (Corynebacterium nigricans) protein is Aspartate carbamoyltransferase catalytic subunit.